The primary structure comprises 175 residues: Early E1A protein (175 aa).

The segment at 40–48 (PSLHDLFDL) is interaction with RB1 in competition with E2F1. Positions 106-110 (LLCLE) match the LXCXE motif, interaction with host RB1 motif. Residues 146–164 (CLRCAYYQEQGENSICGLC) fold into a zinc finger.

The protein belongs to the adenoviridae E1A protein family. In terms of assembly, interacts with host UBE2I; this interaction interferes with polySUMOylation. Interacts with host RB1; this interaction induces the aberrant dissociation of RB1-E2F1 complex thereby disrupting the activity of RB1 and activating E2F1-regulated genes. Interacts with host ATF7; the interaction enhances ATF7-mediated viral transactivation activity which requires the zinc binding domains of both proteins. Isoform early E1A 32 kDa protein and isoform early E1A 26 kDa protein interact (via N-terminus) with CUL1 and E3 ubiquitin ligase RBX1; these interactions inhibit RBX1-CUL1-dependent elongation reaction of ubiquitin chains and attenuate ubiquitination of SCF(FBXW7) target proteins. Interacts (via PXLXP motif) with host ZMYND11/BS69 (via MYND-type zinc finger); this interaction inhibits E1A mediated transactivation. Interacts with host EP300; this interaction stimulates the acetylation of RB1 by recruiting EP300 and RB1 into a multimeric-protein complex. Interacts with host CTBP1 and CTBP2; this interaction seems to potentiate viral replication. Interacts with host DCAF7. Interacts with host DYRK1A. Interacts with host KPNA4; this interaction allows E1A import into the host nucleus. Interacts with host EP400; this interaction stabilizes MYC. Interacts with host TBP protein; this interaction probably disrupts the TBP-TATA complex.

The protein resides in the host nucleus. Functionally, plays a role in viral genome replication by driving entry of quiescent cells into the cell cycle. Stimulation of progression from G1 to S phase allows the virus to efficiently use the cellular DNA replicating machinery to achieve viral genome replication. E1A protein has both transforming and trans-activating activities. Induces the disassembly of the E2F1 transcription factor from RB1 by direct competition for the same binding site on RB1, with subsequent transcriptional activation of E2F1-regulated S-phase genes and of the E2 region of the adenoviral genome. Release of E2F1 leads to the ARF-mediated inhibition of MDM2 and causes TP53/p53 to accumulate because it is not targeted for degradation by MDM2-mediated ubiquitination anymore. This increase in TP53, in turn, would arrest the cell proliferation and direct its death but this effect is counteracted by the viral protein E1B-55K. Inactivation of the ability of RB1 to arrest the cell cycle is critical for cellular transformation, uncontrolled cellular growth and proliferation induced by viral infection. Interaction with RBX1 and CUL1 inhibits ubiquitination of the proteins targeted by SCF(FBXW7) ubiquitin ligase complex, and may be linked to unregulated host cell proliferation. The tumorigenesis-restraining activity of E1A may be related to the disruption of the host CtBP-CtIP complex through the CtBP binding motif. In Canis lupus familiaris (Dog), this protein is Early E1A protein.